The chain runs to 235 residues: Large ribosomal subunit protein bL25 (235 aa).

Residues 201-235 (PVAEAKGKGKAAKPAATAKPAAAAAKPAAKPKAKK) are disordered. Residues 212 to 228 (AKPAATAKPAAAAAKPA) show a composition bias toward low complexity.

The protein belongs to the bacterial ribosomal protein bL25 family. CTC subfamily. In terms of assembly, part of the 50S ribosomal subunit; part of the 5S rRNA/L5/L18/L25 subcomplex. Contacts the 5S rRNA. Binds to the 5S rRNA independently of L5 and L18.

This is one of the proteins that binds to the 5S RNA in the ribosome where it forms part of the central protuberance. This chain is Large ribosomal subunit protein bL25, found in Verminephrobacter eiseniae (strain EF01-2).